We begin with the raw amino-acid sequence, 234 residues long: UPF0173 metal-dependent hydrolase Atu1317 (234 aa).

Belongs to the UPF0173 family.

The chain is UPF0173 metal-dependent hydrolase Atu1317 from Agrobacterium fabrum (strain C58 / ATCC 33970) (Agrobacterium tumefaciens (strain C58)).